The chain runs to 579 residues: Matrix metalloproteinase-C (579 aa).

A signal peptide spans 1–17 (MRLIYVIAILLVSTCQA). Positions 18-129 (GFFSSLVSRF…SRCGVTDAPL (112 aa)) are cleaved as a propeptide — activation peptide. Positions 32 to 51 (NSSPSSSSSSSSFSNSRKPS) are disordered. Residues 33-50 (SSPSSSSSSSSFSNSRKP) show a composition bias toward low complexity. The Cysteine switch signature appears at 120-127 (SRCGVTDA). The Zn(2+) site is built by cysteine 122, histidine 200, aspartate 202, histidine 215, and histidine 225. The N-linked (GlcNAc...) asparagine glycan is linked to asparagine 231. Residue histidine 254 participates in Zn(2+) binding. The active site involves glutamate 255. Zn(2+) contacts are provided by histidine 258 and histidine 264. The segment at 307-394 (SGRSSSGSDF…SSSGSSGGGC (88 aa)) is disordered. The segment covering 315–324 (DFGGSSGGGS) has biased composition (gly residues). Residues 325 to 341 (RTTARPTTTTRSWFGRF) are compositionally biased toward low complexity. A compositionally biased stretch (gly residues) spans 373 to 394 (WGSGSGSSGRGGSSSGSSGGGC). Hemopexin repeat units follow at residues 395-437 (PSHI…FPSA) and 438-490 (PTPV…LGFS).

It belongs to the peptidase M10A family. The cofactor is Zn(2+).

It localises to the secreted. It is found in the extracellular space. The protein resides in the extracellular matrix. Its activity is regulated as follows. Inhibited by human TIMP1 and TIMP2 and the broad MMP inhibitors BB94 (Batimastat) and CT543. Its function is as follows. Metalloproteinase. This is Matrix metalloproteinase-C from Caenorhabditis elegans.